The following is a 414-amino-acid chain: Gamma-glutamyl phosphate reductase (414 aa).

Belongs to the gamma-glutamyl phosphate reductase family.

Its subcellular location is the cytoplasm. It carries out the reaction L-glutamate 5-semialdehyde + phosphate + NADP(+) = L-glutamyl 5-phosphate + NADPH + H(+). The protein operates within amino-acid biosynthesis; L-proline biosynthesis; L-glutamate 5-semialdehyde from L-glutamate: step 2/2. Functionally, catalyzes the NADPH-dependent reduction of L-glutamate 5-phosphate into L-glutamate 5-semialdehyde and phosphate. The product spontaneously undergoes cyclization to form 1-pyrroline-5-carboxylate. The protein is Gamma-glutamyl phosphate reductase of Bacillus anthracis (strain A0248).